The following is a 440-amino-acid chain: Exosome complex component RRP45 (440 aa).

Ser65 bears the Phosphoserine mark. Position 297 is an N6-acetyllysine; alternate (Lys297). Lys297 is covalently cross-linked (Glycyl lysine isopeptide (Lys-Gly) (interchain with G-Cter in SUMO1); alternate). Residue Lys297 forms a Glycyl lysine isopeptide (Lys-Gly) (interchain with G-Cter in SUMO2); alternate linkage. 2 positions are modified to phosphoserine: Ser306 and Ser346. The segment at 341–362 (EGIENSWGHLEDSEKEDEDEGG) is disordered. A compositionally biased stretch (acidic residues) spans 353–362 (SEKEDEDEGG). 2 positions are modified to phosphoserine: Ser393 and Ser395. The tract at residues 404–440 (EPDKNPKKIRTQTISATQVKAPSKKPVKKRKKKRAAN) is disordered. The span at 425 to 440 (PSKKPVKKRKKKRAAN) shows a compositional bias: basic residues.

This sequence belongs to the RNase PH family. As to quaternary structure, component of the RNA exosome core complex (Exo-9), composed of EXOSC1, EXOSC2, EXOSC3, EXOSC4, EXOSC5, EXOSC6, EXOSC7, EXOSC8 and EXOSC9; within the complex interacts with EXOSC3, EXOSC4, EXOSC5 and DIS3. The catalytically inactive RNA exosome core complex (Exo-9) associates with the catalytic subunit EXOSC10/RRP6. Exo-9 may associate with DIS3 to form the nucleolar exosome complex, or DIS3L to form the cytoplasmic exosome complex. Exo-9 is formed by a hexameric base ring consisting of the heterodimers EXOSC4-EXOSC9, EXOSC5-EXOSC8 and EXOSC6-EXOSC7, and a cap ring consisting of EXOSC1, EXOSC2 and EXOSC3. The RNA exosome complex associates with cofactors C1D/RRP47, MPHOSPH6/MPP6 and MTREX/MTR4. Interacts (via C-terminus region) with SETX (via N-terminus domain); the interaction enhances SETX sumoylation. Interacts with DIS3; the interaction is direct.

It is found in the cytoplasm. The protein resides in the nucleus. Its subcellular location is the nucleolus. It localises to the nucleoplasm. Non-catalytic component of the RNA exosome complex which has 3'-&gt;5' exoribonuclease activity and participates in a multitude of cellular RNA processing and degradation events. In the nucleus, the RNA exosome complex is involved in proper maturation of stable RNA species such as rRNA, snRNA and snoRNA, in the elimination of RNA processing by-products and non-coding 'pervasive' transcripts, such as antisense RNA species and promoter-upstream transcripts (PROMPTs), and of mRNAs with processing defects, thereby limiting or excluding their export to the cytoplasm. The RNA exosome may be involved in Ig class switch recombination (CSR) and/or Ig variable region somatic hypermutation (SHM) by targeting AICDA deamination activity to transcribed dsDNA substrates. In the cytoplasm, the RNA exosome complex is involved in general mRNA turnover and specifically degrades inherently unstable mRNAs containing AU-rich elements (AREs) within their 3' untranslated regions, and in RNA surveillance pathways, preventing translation of aberrant mRNAs. It seems to be involved in degradation of histone mRNA. The catalytic inactive RNA exosome core complex of 9 subunits (Exo-9) is proposed to play a pivotal role in the binding and presentation of RNA for ribonucleolysis, and to serve as a scaffold for the association with catalytic subunits and accessory proteins or complexes. EXOSC9 binds to ARE-containing RNAs. This chain is Exosome complex component RRP45 (EXOSC9), found in Bos taurus (Bovine).